The sequence spans 297 residues: 4-hydroxy-tetrahydrodipicolinate synthase (297 aa).

T47 serves as a coordination point for pyruvate. The active-site Proton donor/acceptor is the Y136. K165 (schiff-base intermediate with substrate) is an active-site residue. Pyruvate is bound at residue T206.

The protein belongs to the DapA family. In terms of assembly, homotetramer; dimer of dimers.

It is found in the cytoplasm. It carries out the reaction L-aspartate 4-semialdehyde + pyruvate = (2S,4S)-4-hydroxy-2,3,4,5-tetrahydrodipicolinate + H2O + H(+). The protein operates within amino-acid biosynthesis; L-lysine biosynthesis via DAP pathway; (S)-tetrahydrodipicolinate from L-aspartate: step 3/4. In terms of biological role, catalyzes the condensation of (S)-aspartate-beta-semialdehyde [(S)-ASA] and pyruvate to 4-hydroxy-tetrahydrodipicolinate (HTPA). The protein is 4-hydroxy-tetrahydrodipicolinate synthase of Sulfurovum sp. (strain NBC37-1).